Reading from the N-terminus, the 465-residue chain is Cysteine--tRNA ligase (465 aa).

Zn(2+) is bound at residue C29. The 'HIGH' region motif lies at 31–41 (PTVYNYIHIGN). Zn(2+)-binding residues include C209, H234, and E238. A 'KMSKS' region motif is present at residues 266-270 (KMSKS). An ATP-binding site is contributed by K269. S270 carries the phosphoserine modification.

Belongs to the class-I aminoacyl-tRNA synthetase family. In terms of assembly, monomer. Zn(2+) serves as cofactor.

Its subcellular location is the cytoplasm. It catalyses the reaction tRNA(Cys) + L-cysteine + ATP = L-cysteinyl-tRNA(Cys) + AMP + diphosphate. This is Cysteine--tRNA ligase from Bacillus cereus (strain G9842).